The following is a 245-amino-acid chain: Chloride intracellular channel protein 2 (245 aa).

Positions 1–96 (MASLALNTQA…EEFLEKTLAP (96 aa)) are required for insertion into the membrane. E25 provides a ligand contact to glutathione. Residues 30 to 33 (CPFC) carry the G-site motif. Residues C30 and C33 are joined by a disulfide bond. A helical membrane pass occupies residues 32–52 (FCQRLFMILWLKGVKFNVTTI). Positions 76-239 (NKELKTDFIK…PEDKEIENTY (164 aa)) constitute a GST C-terminal domain. Residue H227 participates in glutathione binding.

It belongs to the chloride channel CLIC family. As to quaternary structure, monomer. Interacts with TRAPPC2 and RYR2.

The protein localises to the cytoplasm. The protein resides in the membrane. The enzyme catalyses chloride(in) = chloride(out). It carries out the reaction tert-butyl hydroperoxide + 2 glutathione = tert-butanol + glutathione disulfide + H2O. The catalysed reaction is cumene hydroperoxide + 2 glutathione = 2-phenylpropan-2-ol + glutathione disulfide + H2O. In the soluble state, catalyzes glutaredoxin-like thiol disulfide exchange reactions with reduced glutathione as electron donor. Displays weak glutathione peroxidase activity. Can insert into membranes and form chloride ion channels. Membrane insertion seems to be redox-regulated and may occur only under oxidizing conditions. Modulates the activity of RYR2 and inhibits calcium influx. The sequence is that of Chloride intracellular channel protein 2 from Rattus norvegicus (Rat).